The chain runs to 428 residues: Sialidase-3 (428 aa).

Positions tyrosine 24–proline 27 match the FRIP motif motif. Substrate contacts are provided by arginine 25 and arginine 45. Residue aspartate 50 is the Proton acceptor of the active site. A BNR 1 repeat occupies isoleucine 129–glutamate 140. 2 residues coordinate substrate: tyrosine 179 and tyrosine 181. The BNR 2 repeat unit spans residues isoleucine 203 to histidine 214. Residues glutamate 225 and arginine 245 each coordinate substrate. One copy of the BNR 3 repeat lies at alanine 254–arginine 265. A disordered region spans residues arginine 294–glutamate 318. The span at lysine 301–serine 313 shows a compositional bias: polar residues. The residue at position 313 (serine 313) is a Phosphoserine. Position 340 (arginine 340) interacts with substrate. Tyrosine 370 (nucleophile) is an active-site residue. Residue glutamate 387 is part of the active site.

The protein belongs to the glycosyl hydrolase 33 family. Interacts with CAV1; this interaction enhances NEU3 sialidase activity within caveola. Interacts with EGFR; this interaction mediates desialylation of EGFR and enhances downstream signaling. Post-translationally, palmitoylated; may regulate intracellular trafficking and anchorage to plasma membrane and endomembranes. Highly expressed in skeletal muscle, testis, adrenal gland and thymus, followed by pancreas, liver, heart and thymus. Weakly expressed in kidney, placenta, brain and lung.

Its subcellular location is the cell membrane. It localises to the membrane. The protein localises to the caveola. It is found in the early endosome membrane. The protein resides in the recycling endosome membrane. Its subcellular location is the lysosome membrane. The catalysed reaction is Hydrolysis of alpha-(2-&gt;3)-, alpha-(2-&gt;6)-, alpha-(2-&gt;8)- glycosidic linkages of terminal sialic acid residues in oligosaccharides, glycoproteins, glycolipids, colominic acid and synthetic substrates.. It carries out the reaction a ganglioside GD1a + H2O = a ganglioside GM1 + N-acetylneuraminate. It catalyses the reaction a ganglioside GD1a (d18:1(4E)) + H2O = a ganglioside GM1 (d18:1(4E)) + N-acetylneuraminate. The enzyme catalyses a ganglioside GD1b + H2O = a ganglioside GM1 + N-acetylneuraminate. The catalysed reaction is a ganglioside GD1b (d18:1(4E)) + H2O = a ganglioside GM1 (d18:1(4E)) + N-acetylneuraminate. It carries out the reaction a ganglioside GD3 + H2O = a ganglioside GM3 + N-acetylneuraminate. It catalyses the reaction a ganglioside GD3 (d18:1(4E)) + H2O = a ganglioside GM3 (d18:1(4E)) + N-acetylneuraminate. The enzyme catalyses a ganglioside GM3 + H2O = a beta-D-galactosyl-(1-&gt;4)-beta-D-glucosyl-(1&lt;-&gt;1)-ceramide + N-acetylneuraminate. The catalysed reaction is a ganglioside GM1 + H2O = a ganglioside GA1 + N-acetylneuraminate. It carries out the reaction a ganglioside GM1 (d18:1(4E)) + H2O = a ganglioside GA1 (d18:1(4E)) + N-acetylneuraminate. It catalyses the reaction a ganglioside GM2 (d18:1(4E)) + H2O = a ganglioside GA2 (d18:1(4E)) + N-acetylneuraminate. The enzyme catalyses a ganglioside GM3 (d18:1(4E)) + H2O = a beta-D-Gal-(1-&gt;4)-beta-D-Glc-(1&lt;-&gt;1)-Cer(d18:1(4E)) + N-acetylneuraminate. The catalysed reaction is a ganglioside GT1b + H2O = a ganglioside GD1b + N-acetylneuraminate. Exo-alpha-sialidase that catalyzes the hydrolytic cleavage of the terminal sialic acid (N-acetylneuraminic acid, Neu5Ac) of a glycan moiety in the catabolism of glycolipids, glycoproteins and oligosacharides. Displays high catalytic efficiency for gangliosides including alpha-(2-&gt;3)-sialylated GD1a and GM3 and alpha-(2-&gt;8)-sialylated GD3. Plays a role in the regulation of transmembrane signaling through the modulation of ganglioside content of the lipid bilayer and by direct interaction with signaling receptors, such as EGFR. Desialylates EGFR and activates downstream signaling in proliferating cells. Contributes to clathrin-mediated endocytosis by regulating sorting of endocytosed receptors to early and recycling endosomes. The polypeptide is Sialidase-3 (NEU3) (Homo sapiens (Human)).